Consider the following 984-residue polypeptide: Glutamate [NMDA] receptor subunit 1 (984 aa).

A signal peptide spans 1 to 24 (MAAAFAYRWLLCAAGIVNVLPIGA). Residues 25–570 (QRHTASDNPS…TLVSFLQPFS (546 aa)) lie on the Extracellular side of the membrane. 7 N-linked (GlcNAc...) asparagine glycosylation sites follow: asparagine 255, asparagine 311, asparagine 342, asparagine 394, asparagine 451, asparagine 478, and asparagine 498. Residues 527–529 (PLT) and arginine 534 contribute to the glycine site. Residues 571-591 (NTLWILVMVSVHVVALVLYLL) form a helical membrane-spanning segment. The Cytoplasmic segment spans residues 592-648 (DRFSPFGRFKLSHSDSNEEKALNLSSAVWFAWGVLLNSGIGEGTPRSFSARVLGMVW). A helical membrane pass occupies residues 649 to 669 (AGFAMIIVASYTANLAAFLVL). Topologically, residues 670–828 (ERPKTKLSGI…KTPNTLGLKN (159 aa)) are extracellular. Asparagine 690 carries an N-linked (GlcNAc...) asparagine glycan. Glycine contacts are provided by serine 700 and aspartate 744. A helical transmembrane segment spans residues 829-849 (MAGVFILVGVGIAGGVGLIII). The Cytoplasmic segment spans residues 850–984 (EVIYKKHQVK…YTSDVSHLVV (135 aa)). Positions 947–984 (KSGLVPPALGLGKTRPQQNPLPPRYSPGYTSDVSHLVV) are disordered. A compositionally biased stretch (polar residues) spans 974–984 (GYTSDVSHLVV).

The protein belongs to the glutamate-gated ion channel (TC 1.A.10.1) family. In terms of assembly, forms a heteromeric NMDA channel with Nmdar2.

It localises to the cell membrane. The protein localises to the postsynaptic cell membrane. Its subcellular location is the postsynaptic density. In terms of biological role, NMDA receptor subtype of glutamate-gated ion channels with high calcium permeability and voltage-dependent sensitivity to magnesium. Mediated by glycine. This protein plays a key role in synaptic plasticity, synaptogenesis, excitotoxicity, memory acquisition and learning. It mediates neuronal functions in glutamate neurotransmission. Is involved in the cell surface targeting of NMDA receptors. Plays a role in associative learning and in long-term memory consolidation. This Drosophila virilis (Fruit fly) protein is Glutamate [NMDA] receptor subunit 1.